The primary structure comprises 89 residues: MANHKSAEKRARQTIKRTERNRFYRTRLKNITKAVRVAVEAKDLNAANEALKVANKSIHSFVSRGFLKKQTAARRVSRLAQLVNTLKAA.

Residues 1-20 (MANHKSAEKRARQTIKRTER) are disordered.

The protein belongs to the bacterial ribosomal protein bS20 family.

Functionally, binds directly to 16S ribosomal RNA. This chain is Small ribosomal subunit protein bS20, found in Campylobacter concisus (strain 13826).